An 821-amino-acid chain; its full sequence is MGQTNSRHSLIETDEPTTSSRVSMLVDRVKLLWKRYTTPLSTEDGSREAHFAVPSENYADTPSRNTPNSSNGFPSETLVTSSAHCSTQPHKDEAYSHHGYSSTMALDDSSLAQTYHEYEEGTSGNSPLRRAIGSYDFLHPRPSGNSSRLDRNSSRPFTSSFHSAPFLSSYGSSNDPSQERVNEYSLPSNSNSTYTTPLQSINNEHPLPTVLENNALLNNSGNSPSLINHLRQYLNQDFSRLHQSPSPIPNSNDNDSQTRRSSWSSIASAFNDFPEEFPNASNPEAHSNFTPLNGNDESTVNMLSRLLSAAAIETVASIMNSEARNMDSQNMANGEPSRFRSVDGSFEQFLTDLRSGNLTNVLQNSSQNGNDQISSDPESNSSDLQYLRMFRFPSFHQSHNQPASNNEASDTNGPALVPVLIVCMRSISETSEDHAPTMTQENQSLHNESRENISINDITERMAQSTEFSTDLPPTFERSNSTFSHPEPTRSDFSQAFTPVSDFPANLFPGSRNLFPTSNSGNQSTSSFSRYNQPTVSVDLRNSSILRRAQEPVNGSTGENHIGDDYISSLLDSSNSNSQRPFSTVPSESNVFSRNASGNFSMSQTHQPTTDNTSSFSTQPGRLSTGLHHFPSDRDLLSNQTRRSSLARSYRFEEQLSVDDNTSDFSTLASNGAADMVTQTHSEGTFSNSTHGDWLIYVFGGLFPEHHPVLSTVSLFSDNPMYEDLLALTTYLGPAKKPVASHEDVKRSGGLFAYFDDASLSSADSCLICLETYTNGDICRKLQACKHFFHQACIDQWLTTGNNSCPLCRAHGVTTQAEEEN.

Disordered regions lie at residues 1–20 (MGQTNSRHSLIETDEPTTSS), 55–96 (SENY…EAYS), 134–205 (SYDF…NNEH), 240–263 (RLHQSPSPIPNSNDNDSQTRRSSW), 274–293 (PEEFPNASNPEAHSNFTPLN), 360–381 (NVLQNSSQNGNDQISSDPESNS), 430–450 (TSEDHAPTMTQENQSLHNESR), 467–497 (EFSTDLPPTFERSNSTFSHPEPTRSDFSQAF), 512–535 (RNLFPTSNSGNQSTSSFSRYNQPT), and 549–641 (AQEP…SNQT). 2 stretches are compositionally biased toward polar residues: residues 58-88 (YADTPSRNTPNSSNGFPSETLVTSSAHCSTQ) and 185-203 (SLPSNSNSTYTTPLQSINN). The span at 279-293 (NASNPEAHSNFTPLN) shows a compositional bias: polar residues. The span at 437-450 (TMTQENQSLHNESR) shows a compositional bias: polar residues. Low complexity-rich tracts occupy residues 517 to 529 (TSNSGNQSTSSFS) and 568 to 578 (SSLLDSSNSNS). Positions 579–622 (QRPFSTVPSESNVFSRNASGNFSMSQTHQPTTDNTSSFSTQPGR) are enriched in polar residues. The RING-type; atypical zinc-finger motif lies at 766 to 809 (CLICLETYTNGDICRKLQACKHFFHQACIDQWLTTGNNSCPLCR).

This is an uncharacterized protein from Schizosaccharomyces pombe (strain 972 / ATCC 24843) (Fission yeast).